The chain runs to 209 residues: Response regulator protein VraR (209 aa).

The region spanning 4 to 120 (KVLFVDDHEM…DIADAVRKTS (117 aa)) is the Response regulatory domain. Asp55 is modified (4-aspartylphosphate). Residues 141 to 206 (RAELYEMLTE…QAVIYAFQHN (66 aa)) enclose the HTH luxR-type domain. Residues 165-184 (NQEIASASHITIKTVKTHVS) constitute a DNA-binding region (H-T-H motif).

As to quaternary structure, homodimer. Phosphorylated by VraS. Phosphorylation state of VraR controls dimerization of the protein.

Its subcellular location is the cytoplasm. In terms of biological role, member of the two-component regulatory system VraS/VraR involved in the control of the cell wall peptidoglycan biosynthesis. Upon cellular stress, the histidine kinase VraS transfers the phosphoryl group onto VraR. Upon phosphorylation, VraR dimerizes at the N-terminal domain. In turn, phosphorylation-induced dimerization expands and enhances the VraR binding to its own promoter leading to increased expression and subsequent modulation of as many as 40 genes, which ultimately constitute the S.aureus response to cell wall damage. In addition, inhibits the host autophagic flux and delays the early stage of autophagosome formation, thereby promoting bacterial survival. Facilitates the ability of S.aureus to resist host polymorphonuclear leukocytes-mediated phagocytosis and killing thus contributing to immune evasion. The polypeptide is Response regulator protein VraR (vraR) (Staphylococcus aureus (strain Mu3 / ATCC 700698)).